Consider the following 876-residue polypeptide: MAPHSLKKNYRCSRSLKQFYGGGPFIVSSDGSFIACACGDVINIVDSTDSSVKSTIEGESDTLTALALSPDDKLLFSAGHSRQIRVWDLETLKCIRSWKGHEGPVMGMACHASGGLLATAGADRKVLVWDVDGGFCTHYFRGHKGVVSSILFHPDSNKNILISGSDDATVRVWDLNAKNTEKKCLAIMEKHFSAVTSIALSEDGLTLFSAGRDKVVNLWDLHDYSCKATVATYEVLEAVTTVSSGTPFASFVASLDQKKSKKKESDSQATYFITVGERGVVRIWKSEGSICLYEQKSSDITVSSDDEESKRGFTAAAMLPSDHGLLCVTADQQFFFYSVVENVEETELVLSKRLVGYNEEIADMKFLGDEEQFLAVATNLEEVRVYDVATMSCSYVLAGHKEVVLSLDTCVSSSGNVLIVTGSKDKTVRLWNATSKSCIGVGTGHNGDILAVAFAKKSFSFFVSGSGDRTLKVWSLDGISEDSEEPINLKTRSVVAAHDKDINSVAVARNDSLVCTGSEDRTASIWRLPDLVHVVTLKGHKRRIFSVEFSTVDQCVMTASGDKTVKIWAISDGSCLKTFEGHTSSVLRASFITDGTQFVSCGADGLLKLWNVNTSECIATYDQHEDKVWALAVGKKTEMIATGGGDAVINLWHDSTASDKEDDFRKEEEAILRGQELENAVLDAEYTKAIRLAFELCRPHKVFELFSGLCRKRDSDEQIVKALQGLEKEEFRLLFEYVREWNTKPKLCHIAQFVLYKTFNILPPTEIVQVKGIGELLEGLIPYSQRHFSRIDRFVRSSFLLDYTLGEMSVIDPETVETEYPKDEKKKEKDVIAAMEQDTDELKQETPSRKRKSQKSKGKSNKKRLIAEAQGSVIAV.

WD repeat units follow at residues 58–97 (GESD…CIRS), 100–139 (GHEG…CTHY), 142–183 (GHKG…TEKK), 190–229 (KHFS…CKAT), 255–294 (LDQK…CLYE), 308–347 (ESKR…EETE), 356–396 (GYNE…CSYV), 399–441 (GHKE…CIGV), 444–484 (GHNG…EDSE), 497–536 (AHDK…HVVT), 539–580 (GHKR…KTFE), 581–620 (GHTS…CIAT), and 623–662 (QHED…DKED). The disordered stretch occupies residues 816–876 (VETEYPKDEK…AEAQGSVIAV (61 aa)). Residues 819–831 (EYPKDEKKKEKDV) show a composition bias toward basic and acidic residues. Residues 848-855 (SRKRKSQK) carry the Nuclear localization signal motif. The span at 849–864 (RKRKSQKSKGKSNKKR) shows a compositional bias: basic residues.

Preferentially expressed in dividing cells in a variety of tissues and meristematic regions.

The protein resides in the nucleus. Its subcellular location is the nucleolus. In terms of biological role, essential protein involved in the regulation of cell division planes during embryogenesis which defines cell patterning, especially longitudinal division planes of the proembryo, probably via the regulation of embryo patterning genes expression patterns. In Arabidopsis thaliana (Mouse-ear cress), this protein is Protein TORMOZ EMBRYO DEFECTIVE.